The sequence spans 382 residues: LIM homeobox transcription factor 1-alpha (382 aa).

2 LIM zinc-binding domains span residues 33 to 92 and 92 to 154; these read SVCE…LFAV and VKCG…EREL. Disordered stretches follow at residues 161–208 and 252–285; these read AASD…QQRR and KLAR…GMEG. Residues 195–254 constitute a DNA-binding region (homeobox); it reads PKRPRTILTTQQRRAFKASFEVSSKPCRKVRETLAAETGLSVRVVQVWFQNQRAKMKKLA. Residues 256–269 are compositionally biased toward low complexity; that stretch reads RQQQQQQDQQNTQR.

In terms of tissue distribution, isoform 1 is expressed in many tissues. Not found in heart, liver, spleen and testis. Relatively highly expressed in fetal brain. Isoform LMX1A-4AB is expressed in testis.

Its subcellular location is the nucleus. Acts as a transcriptional activator by binding to an A/T-rich sequence, the FLAT element, in the insulin gene promoter. Required for development of the roof plate and, in turn, for specification of dorsal cell fates in the CNS and developing vertebrae. This chain is LIM homeobox transcription factor 1-alpha (LMX1A), found in Homo sapiens (Human).